Reading from the N-terminus, the 358-residue chain is Probable (S)-tetrahydroprotoberberine N-methyltransferase 2 (358 aa).

S98, G136, N160, Q164, D186, V187, and I202 together coordinate S-adenosyl-L-methionine. The active site involves C333.

It belongs to the CFA/CMAS family. In terms of assembly, homodimer.

It localises to the cytoplasm. The enzyme catalyses (S)-stylopine + S-adenosyl-L-methionine = (S)-cis-N-methylstylopine + S-adenosyl-L-homocysteine. The catalysed reaction is (S)-tetrahydropalmatine + S-adenosyl-L-methionine = (S)-cis-N-methyltetrahydropalmatine + S-adenosyl-L-homocysteine. It participates in alkaloid biosynthesis. Its function is as follows. N-methyltransferase with a strict substrate specificity for (R,S)-tetrahydropalmatine or (R,S)-stylopine. The polypeptide is Probable (S)-tetrahydroprotoberberine N-methyltransferase 2 (Papaver bracteatum (Great scarlet poppy)).